Here is an 89-residue protein sequence, read N- to C-terminus: Phosphocarrier protein HPr (89 aa).

An HPr domain is found at 1–88 (MLQRDTTIIN…ALIANRFGEG (88 aa)). Catalysis depends on His15, which acts as the Pros-phosphohistidine intermediate.

It belongs to the HPr family.

The protein localises to the cytoplasm. General (non sugar-specific) component of the phosphoenolpyruvate-dependent sugar phosphotransferase system (sugar PTS). This major carbohydrate active-transport system catalyzes the phosphorylation of incoming sugar substrates concomitantly with their translocation across the cell membrane. The phosphoryl group from phosphoenolpyruvate (PEP) is transferred to the phosphoryl carrier protein HPr by enzyme I. Phospho-HPr then transfers it to the PTS EIIA domain. In Cupriavidus necator (strain ATCC 17699 / DSM 428 / KCTC 22496 / NCIMB 10442 / H16 / Stanier 337) (Ralstonia eutropha), this protein is Phosphocarrier protein HPr (phbH).